We begin with the raw amino-acid sequence, 162 residues long: UPF0305 protein MmarC6_0221 (162 aa).

The protein belongs to the UPF0305 family.

The polypeptide is UPF0305 protein MmarC6_0221 (Methanococcus maripaludis (strain C6 / ATCC BAA-1332)).